Here is a 466-residue protein sequence, read N- to C-terminus: Cysteine--tRNA ligase (466 aa).

Zn(2+) is bound at residue cysteine 28. The short motif at 30-40 (PTVYNYIHIGN) is the 'HIGH' region element. Positions 208, 233, and 237 each coordinate Zn(2+). Residues 265–269 (KMSKS) carry the 'KMSKS' region motif. ATP is bound at residue lysine 268.

The protein belongs to the class-I aminoacyl-tRNA synthetase family. Monomer. The cofactor is Zn(2+).

The protein localises to the cytoplasm. The catalysed reaction is tRNA(Cys) + L-cysteine + ATP = L-cysteinyl-tRNA(Cys) + AMP + diphosphate. This Staphylococcus saprophyticus subsp. saprophyticus (strain ATCC 15305 / DSM 20229 / NCIMB 8711 / NCTC 7292 / S-41) protein is Cysteine--tRNA ligase.